We begin with the raw amino-acid sequence, 86 residues long: Large ribosomal subunit protein bL27 (86 aa).

Belongs to the bacterial ribosomal protein bL27 family.

The polypeptide is Large ribosomal subunit protein bL27 (Xanthomonas campestris pv. campestris (strain 8004)).